We begin with the raw amino-acid sequence, 511 residues long: Zinc finger and BTB domain-containing protein 45 (511 aa).

In terms of domain architecture, BTB spans 33–96 (CDVTVRIREA…LYSGSLVVAQ (64 aa)). Residues 159-168 (ARPPGHPGAA) show a composition bias toward low complexity. Disordered stretches follow at residues 159-241 (ARPP…PDCA) and 294-403 (EDGA…PPTY). The segment covering 206–224 (RGDEDDEESDDETDGEDGE) has biased composition (acidic residues). Positions 339 to 360 (PGPPAPPPSAPSGPAPAPPPAF) are enriched in pro residues. Positions 378 to 397 (PAPSAAPTTAPSGTPARTPG) are enriched in low complexity. 4 consecutive C2H2-type zinc fingers follow at residues 403–425 (YECS…MFIH), 431–453 (HQCA…MVTH), 459–481 (FQCA…MRTH), and 486–508 (APCP…LAAH).

The protein belongs to the krueppel C2H2-type zinc-finger protein family.

It is found in the nucleus. Functionally, may be involved in transcriptional regulation. In the central nervous system, may play a role in glial cell differentiation. This is Zinc finger and BTB domain-containing protein 45 (ZBTB45) from Homo sapiens (Human).